The sequence spans 101 residues: MSTSLTKADLAEKLYEELGFNKREAKELVEHFFEEIRNSLEDNEQVKLSGFGNFDLRDKKQRPGRNPKTGEEIPITARRVVTFRPGQKLKARVEAYAGTKS.

The protein belongs to the bacterial histone-like protein family. Heterodimer of an alpha and a beta chain.

Its function is as follows. This protein is one of the two subunits of integration host factor, a specific DNA-binding protein that functions in genetic recombination as well as in transcriptional and translational control. This Saccharophagus degradans (strain 2-40 / ATCC 43961 / DSM 17024) protein is Integration host factor subunit alpha.